The chain runs to 77 residues: Beta-defensin 135 (77 aa).

The first 24 residues, 1-24, serve as a signal peptide directing secretion; the sequence is MATRSVLLALVVLNLLFYVPPGRS. 3 disulfides stabilise this stretch: Cys37-Cys64, Cys44-Cys58, and Cys48-Cys65.

It belongs to the beta-defensin family.

The protein localises to the secreted. In terms of biological role, has antibacterial activity. This is Beta-defensin 135 (DEFB135) from Homo sapiens (Human).